The chain runs to 981 residues: uncharacterized protein (981 aa).

The Carrier domain occupies 535-612 (VLLNPVAIEI…SIASIIQKKS (78 aa)). The residue at position 571 (S571) is an O-(pantetheine 4'-phosphoryl)serine.

It belongs to the ATP-dependent AMP-binding enzyme family.

This is an uncharacterized protein from Schizosaccharomyces pombe (strain 972 / ATCC 24843) (Fission yeast).